A 226-amino-acid polypeptide reads, in one-letter code: Phosphate propanoyltransferase (226 aa).

44-46 (VSN) contacts CoA. Positions 48 and 50 each coordinate Zn(2+). Residues Met-72, Lys-90, and Arg-97 each contribute to the CoA site. A phosphate-binding site is contributed by Arg-103. Residue Glu-109 coordinates Zn(2+). A CoA-binding site is contributed by Phe-116. Zn(2+)-binding residues include His-157, His-159, and His-204. CoA is bound at residue Asn-211.

It belongs to the PduL family. Full-length protein forms large oligomers. Homodimer, when purified in the absence of the encapsulation peptide (EP, residues 1-47). The EP may influence oligomerization. Zn(2+) is required as a cofactor.

The protein resides in the bacterial microcompartment. The enzyme catalyses propanoyl-CoA + phosphate = propanoyl phosphate + CoA. Its pathway is polyol metabolism; 1,2-propanediol degradation. Functionally, involved in 1,2-propanediol (1,2-PD) utilization within the bacterial microcompartment (BMC) dedicated to 1,2-PD degradation by catalyzing the conversion of propanoyl-CoA to propanoyl-phosphate. CoA is regenerated within the pdu BMC (for use by PduP) via this enzyme, although there must also be cofactor transport across the BMC. Directly targeted to the BMC. Phosphate is probably the first substrate to bind in the forward direction. CoA is probably the first substrate to bind in the reverse direction, and might bind to the enzyme as the BMC assembles, ensuring cofactor encapsulation. This chain is Phosphate propanoyltransferase, found in Rhodopseudomonas palustris (strain BisB18).